We begin with the raw amino-acid sequence, 243 residues long: Transmembrane protein 174 (243 aa).

The next 2 helical transmembrane spans lie at 40–60 and 73–93; these read LLFS…MGWI and LLGP…VCKF.

Interacts with SLC34A1; regulates SLC34A1 internalization by PTH and FGF23. As to expression, predominantly expressed in kidney. Selectively localized in the apical membrane of renal proximal tubule epithelial cells.

The protein localises to the endoplasmic reticulum membrane. Its subcellular location is the apical cell membrane. Regulator of plasma phosphate homeostasis. Decreases serum inorganic phosphate (Pi) uptake by regulating the sodium-phosphate cotransporter SLC34A1 trafficking by PTH and FGF23 in the kidney. The protein is Transmembrane protein 174 (TMEM174) of Homo sapiens (Human).